Consider the following 466-residue polypeptide: SAGFKAGVKDYRLTYYTPDYETKDTDILAAFRVTPQPGVPAEEAGAAVAAESSTGTWTTVWTDGLTSLDRYKGRCYHIEAVVGEENQYIAYVAYPLDLFEEGSVTNMFTSIVGNVFGFKALRALRLEDLRIPPSYSKTFQGPPHGIQVERDKLNKYGRPLLGCTIKPKLGLSAKNYGRAVYECLRGGLDFTKDDENVNSQPFMRWRDRFLFCAEAIYKAQAETGEIKGHYLNATAGTCEEMIKRAVFARELGVPIVMHDYLTGGFTANTTLAHYCRDNGLLLHIHRAMHAVIDRQKNHGMHFRVLAKALRMSGGDHIHAGTVVGELEGEREMTLGFVDLLRDDYIEKDRSRGIFFTQDWVSMPGVLPVASGGIHVWHMPALTEIFGDDSVLQFGGGTLGHPWGNAPGAVANRVALEACVQARNEGRDLAREGNEIIREACNWSPELAAACEVWKEIKFEFEPVDKT.

Residue lysine 5 is modified to N6,N6,N6-trimethyllysine. Asparagine 114 and threonine 164 together coordinate substrate. Residue lysine 166 is the Proton acceptor of the active site. Residue lysine 168 coordinates substrate. 3 residues coordinate Mg(2+): lysine 192, aspartate 194, and glutamate 195. Residue lysine 192 is modified to N6-carboxylysine. The Proton acceptor role is filled by histidine 285. Substrate is bound by residues arginine 286, histidine 318, and serine 370.

This sequence belongs to the RuBisCO large chain family. Type I subfamily. As to quaternary structure, heterohexadecamer of 8 large chains and 8 small chains; disulfide-linked. The disulfide link is formed within the large subunit homodimers. It depends on Mg(2+) as a cofactor. The disulfide bond which can form in the large chain dimeric partners within the hexadecamer appears to be associated with oxidative stress and protein turnover.

The protein localises to the plastid. The protein resides in the chloroplast. The catalysed reaction is 2 (2R)-3-phosphoglycerate + 2 H(+) = D-ribulose 1,5-bisphosphate + CO2 + H2O. It catalyses the reaction D-ribulose 1,5-bisphosphate + O2 = 2-phosphoglycolate + (2R)-3-phosphoglycerate + 2 H(+). RuBisCO catalyzes two reactions: the carboxylation of D-ribulose 1,5-bisphosphate, the primary event in carbon dioxide fixation, as well as the oxidative fragmentation of the pentose substrate in the photorespiration process. Both reactions occur simultaneously and in competition at the same active site. This chain is Ribulose bisphosphate carboxylase large chain, found in Isophysis tasmanica.